The sequence spans 444 residues: Probable kynurenine--oxoglutarate transaminase BNA3 (444 aa).

Residue lysine 271 is modified to N6-(pyridoxal phosphate)lysine.

It belongs to the class-I pyridoxal-phosphate-dependent aminotransferase family. As to quaternary structure, homodimer. The cofactor is pyridoxal 5'-phosphate.

It localises to the cytoplasm. Its subcellular location is the mitochondrion. The enzyme catalyses L-kynurenine + 2-oxoglutarate = kynurenate + L-glutamate + H2O. The protein operates within amino-acid degradation; L-kynurenine degradation; kynurenate from L-kynurenine: step 1/2. In terms of biological role, catalyzes the irreversible transamination of the L-tryptophan metabolite L-kynurenine to form kynurenic acid (KA). The chain is Probable kynurenine--oxoglutarate transaminase BNA3 (BNA3) from Saccharomyces cerevisiae (strain ATCC 204508 / S288c) (Baker's yeast).